We begin with the raw amino-acid sequence, 280 residues long: Fructose-1,6-bisphosphatase class 1 (280 aa).

Mg(2+) contacts are provided by E64, D83, L85, and D86. Substrate is bound by residues 86–89 (DGSS), Y189, and K220. E226 provides a ligand contact to Mg(2+).

This sequence belongs to the FBPase class 1 family. In terms of assembly, homotetramer. The cofactor is Mg(2+).

The protein resides in the cytoplasm. The enzyme catalyses beta-D-fructose 1,6-bisphosphate + H2O = beta-D-fructose 6-phosphate + phosphate. Its pathway is carbohydrate biosynthesis; gluconeogenesis. This chain is Fructose-1,6-bisphosphatase class 1, found in Campylobacter jejuni subsp. jejuni serotype O:2 (strain ATCC 700819 / NCTC 11168).